The primary structure comprises 827 residues: N-terminal kinase-like protein (827 aa).

The 309-residue stretch at 1 to 309 (MWFWSRDPAR…PEDFCRHKIL (309 aa)) folds into the Protein kinase domain. HEAT repeat units follow at residues 345–383 (IIPV…VNAQ), 384–422 (IFPH…LNME), and 502–540 (VLPV…EDPS). Residues 586–624 (DAAASEGASAPSTASEASKPDTAPSSSAPPAAASTAPTS) are compositionally biased toward low complexity. A disordered region spans residues 586–827 (DAAASEGASA…PLKLGVRKLD (242 aa)). Residues 630–640 (EKGAPDNSLDR) show a composition bias toward basic and acidic residues. Residues 641-652 (WDDEDWGSLEDA) show a composition bias toward acidic residues. A compositionally biased stretch (basic and acidic residues) spans 667–678 (DWGHGKTQEKTV). Composition is skewed to polar residues over residues 679 to 690 (DFSSSRSKTKQV) and 737 to 746 (NWDTSGSSGR). Acidic residues predominate over residues 774-783 (GGDDNWESVE). A coiled-coil region spans residues 788–817 (LSKAEMARKKREERQKEIEAKRAERRAAKG). A compositionally biased stretch (basic and acidic residues) spans 792–814 (EMARKKREERQKEIEAKRAERRA).

The protein belongs to the protein kinase superfamily.

In terms of biological role, regulates COPI-mediated retrograde protein traffic at the interface between the Golgi apparatus and the endoplasmic reticulum. Involved in the maintenance of the Golgi apparatus morphology. This Xenopus tropicalis (Western clawed frog) protein is N-terminal kinase-like protein (scyl1).